A 787-amino-acid chain; its full sequence is Endonuclease MutS2 (787 aa).

336 to 343 is a binding site for ATP; that stretch reads GPNTGGKT. In terms of domain architecture, Smr spans 712 to 787; sequence LDLRGVRYED…GNGATEVQFK (76 aa).

Belongs to the DNA mismatch repair MutS family. MutS2 subfamily. Homodimer. Binds to stalled ribosomes, contacting rRNA.

Its function is as follows. Endonuclease that is involved in the suppression of homologous recombination and thus may have a key role in the control of bacterial genetic diversity. Functionally, acts as a ribosome collision sensor, splitting the ribosome into its 2 subunits. Detects stalled/collided 70S ribosomes which it binds and splits by an ATP-hydrolysis driven conformational change. Acts upstream of the ribosome quality control system (RQC), a ribosome-associated complex that mediates the extraction of incompletely synthesized nascent chains from stalled ribosomes and their subsequent degradation. Probably generates substrates for RQC. This is Endonuclease MutS2 from Lactiplantibacillus plantarum (strain ATCC BAA-793 / NCIMB 8826 / WCFS1) (Lactobacillus plantarum).